Reading from the N-terminus, the 132-residue chain is MTMTDPIADFLTRLRNANSAYHDEVTLPHSKIKANIAEILKSEGYISDYRTEDARVGKSLVVQLKYGPSRERSIAGLRRVSKPGLRVYAKSTNLPRVLGGLGVAIISTSSGLLTDRQAARSGVGGEVLAYVW.

It belongs to the universal ribosomal protein uS8 family. As to quaternary structure, part of the 30S ribosomal subunit. Contacts proteins S5 and S12.

Functionally, one of the primary rRNA binding proteins, it binds directly to 16S rRNA central domain where it helps coordinate assembly of the platform of the 30S subunit. The chain is Small ribosomal subunit protein uS8 from Mycobacterium sp. (strain KMS).